The sequence spans 178 residues: UPF0215 protein STK_03040 (178 aa).

The protein belongs to the UPF0215 family.

The chain is UPF0215 protein STK_03040 from Sulfurisphaera tokodaii (strain DSM 16993 / JCM 10545 / NBRC 100140 / 7) (Sulfolobus tokodaii).